Consider the following 240-residue polypeptide: Ribose-5-phosphate isomerase A (240 aa).

Substrate-binding positions include 41–44, 94–97, and 107–110; these read TGST, DGAD, and KGGG. E116 acts as the Proton acceptor in catalysis. K134 contacts substrate.

This sequence belongs to the ribose 5-phosphate isomerase family. In terms of assembly, homodimer.

It carries out the reaction aldehydo-D-ribose 5-phosphate = D-ribulose 5-phosphate. It functions in the pathway carbohydrate degradation; pentose phosphate pathway; D-ribose 5-phosphate from D-ribulose 5-phosphate (non-oxidative stage): step 1/1. Its function is as follows. Catalyzes the reversible conversion of ribose-5-phosphate to ribulose 5-phosphate. The sequence is that of Ribose-5-phosphate isomerase A from Polaromonas sp. (strain JS666 / ATCC BAA-500).